Here is a 249-residue protein sequence, read N- to C-terminus: Secretion system apparatus lipoprotein SsaJ (249 aa).

An N-terminal signal peptide occupies residues 1–18 (MKVHRIVFLTVLTFFLTA). A lipid anchor (N-palmitoyl cysteine) is attached at C19. C19 is lipidated: S-diacylglycerol cysteine. Residues 225–245 (LMLSLTGLLLGVGILIGYFCL) form a helical membrane-spanning segment.

This sequence belongs to the YscJ lipoprotein family.

It is found in the cell outer membrane. In terms of biological role, component of Salmonella pathogenicity island 2 (SPI-2) type III secretion system, required for secretion of some type III-secreted effectors including the SpvB exotoxin. The sequence is that of Secretion system apparatus lipoprotein SsaJ (ssaJ) from Salmonella typhimurium (strain 14028s / SGSC 2262).